We begin with the raw amino-acid sequence, 248 residues long: Coenzyme F420:L-glutamate ligase (248 aa).

GTP is bound by residues 15–18 (IPLI), 45–46 (ET), and K50. A divalent metal cation is bound at residue D115. N118 provides a ligand contact to GTP. 3 residues coordinate a divalent metal cation: D155, S156, and Q213. 211–218 (MGQSDEGI) lines the GTP pocket.

The protein belongs to the CofE family. Homodimer. It depends on Mg(2+) as a cofactor. Requires Mn(2+) as cofactor. K(+) is required as a cofactor.

It catalyses the reaction oxidized coenzyme F420-0 + GTP + L-glutamate = oxidized coenzyme F420-1 + GDP + phosphate + H(+). It carries out the reaction oxidized coenzyme F420-1 + GTP + L-glutamate = oxidized coenzyme F420-2 + GDP + phosphate + H(+). It participates in cofactor biosynthesis; coenzyme F420 biosynthesis. In terms of biological role, catalyzes the GTP-dependent successive addition of two or more gamma-linked L-glutamates to the L-lactyl phosphodiester of 7,8-didemethyl-8-hydroxy-5-deazariboflavin (F420-0) to form coenzyme F420-0-glutamyl-glutamate (F420-2) or polyglutamated F420 derivatives. This chain is Coenzyme F420:L-glutamate ligase, found in Methanococcus maripaludis (strain C6 / ATCC BAA-1332).